The primary structure comprises 280 residues: MDLRRRALLGVDGLRVLLMLFHTVTRIMAEQEVENLSGLSTNPEKDIFVVRENGTTCLMAEFAAKFIVPYDVWASNYVDLITEQADISLTRGAEVKGHCGHDESELQVFWVDRAYALKMLFLKESHNTPKGPEATWKLSKVQFVYDSSEKTHFKDAVSAGKHTANSHHLSALVTPAGKSYECQAQQTISLASSDPQKTVTMILSAVHIQPFDIISDFVFSEEHKCPVDEREQLEETLPLILGLILGLVIVVTLVIYHIHHKMTANQVQIPRDRSQYKHMG.

Positions 1 to 29 (MDLRRRALLGVDGLRVLLMLFHTVTRIMA) are cleaved as a signal peptide. At 30 to 235 (EQEVENLSGL…PVDEREQLEE (206 aa)) the chain is on the extracellular side. 2 N-linked (GlcNAc...) asparagine glycosylation sites follow: Asn35 and Asn53. Residues 236–256 (TLPLILGLILGLVIVVTLVIY) traverse the membrane as a helical segment. Residues 257–280 (HIHHKMTANQVQIPRDRSQYKHMG) lie on the Cytoplasmic side of the membrane.

It belongs to the LAMP family. In terms of processing, glycosylated.

The protein localises to the cytoplasmic vesicle membrane. Its subcellular location is the cell membrane. It is found in the cell projection. It localises to the dendrite. The protein resides in the cytoplasmic vesicle. The protein localises to the secretory vesicle. Its subcellular location is the synaptic vesicle membrane. It is found in the growth cone membrane. It localises to the early endosome membrane. The protein resides in the recycling endosome. The protein localises to the endoplasmic reticulum-Golgi intermediate compartment membrane. Its subcellular location is the endosome membrane. Plays a role in short-term synaptic plasticity in a subset of GABAergic neurons in the brain. The polypeptide is Lysosome-associated membrane glycoprotein 5 (LAMP5) (Bos taurus (Bovine)).